A 360-amino-acid chain; its full sequence is Carbamoyl phosphate synthase small chain (360 aa).

Residues 1 to 169 form a CPSase region; sequence MTKRLLILED…TKTAYPAPGI (169 aa). Residues Ser46, Gly220, and Gly222 each contribute to the L-glutamine site. The Glutamine amidotransferase type-1 domain occupies 172–358; it reads NIVLVDFGLK…LEMIDSWRCT (187 aa). Catalysis depends on Cys247, which acts as the Nucleophile. Positions 248, 251, 289, 291, and 292 each coordinate L-glutamine. Active-site residues include His331 and Asp333.

The protein belongs to the CarA family. Composed of two chains; the small (or glutamine) chain promotes the hydrolysis of glutamine to ammonia, which is used by the large (or ammonia) chain to synthesize carbamoyl phosphate. Tetramer of heterodimers (alpha,beta)4.

It carries out the reaction hydrogencarbonate + L-glutamine + 2 ATP + H2O = carbamoyl phosphate + L-glutamate + 2 ADP + phosphate + 2 H(+). It catalyses the reaction L-glutamine + H2O = L-glutamate + NH4(+). Its pathway is amino-acid biosynthesis; L-arginine biosynthesis; carbamoyl phosphate from bicarbonate: step 1/1. It participates in pyrimidine metabolism; UMP biosynthesis via de novo pathway; (S)-dihydroorotate from bicarbonate: step 1/3. In terms of biological role, small subunit of the glutamine-dependent carbamoyl phosphate synthetase (CPSase). CPSase catalyzes the formation of carbamoyl phosphate from the ammonia moiety of glutamine, carbonate, and phosphate donated by ATP, constituting the first step of 2 biosynthetic pathways, one leading to arginine and/or urea and the other to pyrimidine nucleotides. The small subunit (glutamine amidotransferase) binds and cleaves glutamine to supply the large subunit with the substrate ammonia. This chain is Carbamoyl phosphate synthase small chain, found in Streptococcus pyogenes serotype M18 (strain MGAS8232).